Reading from the N-terminus, the 425-residue chain is Histidine--tRNA ligase (425 aa).

This sequence belongs to the class-II aminoacyl-tRNA synthetase family. In terms of assembly, homodimer.

The protein resides in the cytoplasm. It carries out the reaction tRNA(His) + L-histidine + ATP = L-histidyl-tRNA(His) + AMP + diphosphate + H(+). The protein is Histidine--tRNA ligase of Chlorobium chlorochromatii (strain CaD3).